The following is a 41-amino-acid chain: Large ribosomal subunit protein bL36 (41 aa).

This sequence belongs to the bacterial ribosomal protein bL36 family.

The polypeptide is Large ribosomal subunit protein bL36 (Hydrogenovibrio crunogenus (strain DSM 25203 / XCL-2) (Thiomicrospira crunogena)).